A 307-amino-acid polypeptide reads, in one-letter code: Cytochrome c1, heme protein, mitochondrial (307 aa).

A mitochondrion-targeting transit peptide spans 1–56 (MFQFVKKKNEFLKFARLGSRAFTQNAQKTHSKGSNIALVSSSLLSVGMIALYYNVY). Over 57-269 (GPSLSAGTPK…EPELDIRKKM (213 aa)) the chain is Mitochondrial intermembrane. In terms of domain architecture, Cytochrome c spans 89 to 259 (ASLRRGFQVY…DVVNFLHWAS (171 aa)). Cys-102, Cys-105, His-106, and Met-225 together coordinate heme c. Residues 270 to 287 (GFQVITVLTILTALSMWY) traverse the membrane as a helical segment. Topologically, residues 288–307 (KRFKWTPIKNRKIFYQRPIK) are mitochondrial matrix.

The protein belongs to the cytochrome c family. Component of the ubiquinol-cytochrome c oxidoreductase (cytochrome b-c1 complex, complex III, CIII), a multisubunit enzyme composed of 3 respiratory subunits cytochrome b, cytochrome c1 and Rieske protein, 2 core protein subunits, and additional low-molecular weight protein subunits. The complex exists as an obligatory dimer and forms supercomplexes (SCs) in the inner mitochondrial membrane with cytochrome c oxidase (complex IV, CIV). Requires heme c as cofactor.

It localises to the mitochondrion inner membrane. The catalysed reaction is a quinol + 2 Fe(III)-[cytochrome c](out) = a quinone + 2 Fe(II)-[cytochrome c](out) + 2 H(+)(out). In terms of biological role, component of the ubiquinol-cytochrome c oxidoreductase, a multisubunit transmembrane complex that is part of the mitochondrial electron transport chain which drives oxidative phosphorylation. The respiratory chain contains 3 multisubunit complexes succinate dehydrogenase (complex II, CII), ubiquinol-cytochrome c oxidoreductase (cytochrome b-c1 complex, complex III, CIII) and cytochrome c oxidase (complex IV, CIV), that cooperate to transfer electrons derived from NADH and succinate to molecular oxygen, creating an electrochemical gradient over the inner membrane that drives transmembrane transport and the ATP synthase. The cytochrome b-c1 complex catalyzes electron transfer from ubiquinol to cytochrome c, linking this redox reaction to translocation of protons across the mitochondrial inner membrane, with protons being carried across the membrane as hydrogens on the quinol. In the process called Q cycle, 2 protons are consumed from the matrix, 4 protons are released into the intermembrane space and 2 electrons are passed to cytochrome c. Cytochrome c1 is a catalytic core subunit containing a c-type heme. It transfers electrons from the [2Fe-2S] iron-sulfur cluster of the Rieske protein to cytochrome c. This Schizosaccharomyces pombe (strain 972 / ATCC 24843) (Fission yeast) protein is Cytochrome c1, heme protein, mitochondrial (cyt1).